The following is a 149-amino-acid chain: Large ribosomal subunit protein bL9 (149 aa).

This sequence belongs to the bacterial ribosomal protein bL9 family.

In terms of biological role, binds to the 23S rRNA. The sequence is that of Large ribosomal subunit protein bL9 from Salmonella dublin (strain CT_02021853).